We begin with the raw amino-acid sequence, 195 residues long: Imidazoleglycerol-phosphate dehydratase (195 aa).

Belongs to the imidazoleglycerol-phosphate dehydratase family.

Its subcellular location is the cytoplasm. The enzyme catalyses D-erythro-1-(imidazol-4-yl)glycerol 3-phosphate = 3-(imidazol-4-yl)-2-oxopropyl phosphate + H2O. Its pathway is amino-acid biosynthesis; L-histidine biosynthesis; L-histidine from 5-phospho-alpha-D-ribose 1-diphosphate: step 6/9. The chain is Imidazoleglycerol-phosphate dehydratase from Geobacter sulfurreducens (strain ATCC 51573 / DSM 12127 / PCA).